The sequence spans 539 residues: MHDKILILDFGSQVTQLIARRVREAHVYCEIHPNDVSDAFVREFAPKAVILSGSHASTYEDHQLRAPQAVWDLGVPVLGICYGMQTMAVQLGGKVEWSDHREFGYAEMRAHGHTRLLDGIDDFKTAEGHGMLKVWMSHGDKVAELPPGFTLMASTPSCPIAGMADEARGYYAVQFHPEVTHTVKGRQIIERFVLQIAGAKPDWIMKNHIEEAVAKIREQVGDEEVILGLSGGVDSSVAAALIHRAIGDQLTCVFVDHGLLRLNEGKMVLDMFEGRLHAKVVHVDASEQFLGHLAGVTDPEQKRKIIGREFVEVFQAEAQKLSKAKWLAQGTIYPDVVESGGTKTKKATTIKSHHNVGGLPETLGLKLLEPLRDLFKDEVRELGVALGLPPEMVYRHPFPGPGLGVRILGEVKREYAELLRRADAIFIEELRGTTATAQDAAAGLCGEADVGKSWYDLTSQAFAVFLPVKSVGVMGDGRTYDYVTSLRAVQTTDFMTAHWAHLPYALLGRASNRIINEVRGINRVVYDISGKPPATIEWE.

One can recognise a Glutamine amidotransferase type-1 domain in the interval 4 to 202 (KILILDFGSQ…VLQIAGAKPD (199 aa)). Cys-81 serves as the catalytic Nucleophile. Residues His-176 and Glu-178 contribute to the active site. Positions 203-395 (WIMKNHIEEA…LGLPPEMVYR (193 aa)) constitute a GMPS ATP-PPase domain. 230-236 (SGGVDSS) contacts ATP.

As to quaternary structure, homodimer.

It carries out the reaction XMP + L-glutamine + ATP + H2O = GMP + L-glutamate + AMP + diphosphate + 2 H(+). It functions in the pathway purine metabolism; GMP biosynthesis; GMP from XMP (L-Gln route): step 1/1. In terms of biological role, catalyzes the synthesis of GMP from XMP. In Burkholderia vietnamiensis (strain G4 / LMG 22486) (Burkholderia cepacia (strain R1808)), this protein is GMP synthase [glutamine-hydrolyzing].